A 366-amino-acid polypeptide reads, in one-letter code: tRNA/tmRNA (uracil-C(5))-methyltransferase (366 aa).

S-adenosyl-L-methionine contacts are provided by Gln-190, Tyr-218, Asn-223, Glu-239, and Asp-299. Catalysis depends on Cys-324, which acts as the Nucleophile. Glu-358 functions as the Proton acceptor in the catalytic mechanism.

This sequence belongs to the class I-like SAM-binding methyltransferase superfamily. RNA M5U methyltransferase family. TrmA subfamily.

The catalysed reaction is uridine(54) in tRNA + S-adenosyl-L-methionine = 5-methyluridine(54) in tRNA + S-adenosyl-L-homocysteine + H(+). It catalyses the reaction uridine(341) in tmRNA + S-adenosyl-L-methionine = 5-methyluridine(341) in tmRNA + S-adenosyl-L-homocysteine + H(+). In terms of biological role, dual-specificity methyltransferase that catalyzes the formation of 5-methyluridine at position 54 (m5U54) in all tRNAs, and that of position 341 (m5U341) in tmRNA (transfer-mRNA). This Escherichia coli O127:H6 (strain E2348/69 / EPEC) protein is tRNA/tmRNA (uracil-C(5))-methyltransferase.